The sequence spans 152 residues: Acidic phospholipase A2 homolog textilotoxin D chain (152 aa).

Residues 1–19 (MHPAHLLVLLGVCVSLLGA) form the signal peptide. Cystine bridges form between Cys38/Cys104, Cys54/Cys151, Cys56/Cys72, Cys71/Cys132, Cys78/Cys125, Cys88/Cys118, and Cys111/Cys123. A glycan (N-linked (GlcNAc...) asparagine) is linked at Asn112.

This sequence belongs to the phospholipase A2 family. Group I subfamily. D49 sub-subfamily. In terms of assembly, heterohexamer. 2 forms exist: 2 A or 2 B chains, 2 C chains and 2 covalently-linked D chains, and 1 A or 1 B, 1 C, 2 covalently-linked D chains and 2 differentially glycosylated covalently-linked D chains. Textilotoxin was originally described as pentameric. Expressed by the venom gland.

It localises to the secreted. Its function is as follows. Snake venom oligomeric phospholipase A2 that has potent presynaptic neurotoxicity. Chain D is not itself neurotoxic, but it is essential for the neurotoxicity of textilotoxin. Chain D possesses a very low phospholipase activity. This Pseudonaja textilis (Eastern brown snake) protein is Acidic phospholipase A2 homolog textilotoxin D chain.